Reading from the N-terminus, the 130-residue chain is Small ribosomal subunit protein uS9 (130 aa).

The protein belongs to the universal ribosomal protein uS9 family.

The sequence is that of Small ribosomal subunit protein uS9 from Bordetella pertussis (strain Tohama I / ATCC BAA-589 / NCTC 13251).